Reading from the N-terminus, the 226-residue chain is Leucyl/phenylalanyl-tRNA--protein transferase (226 aa).

Belongs to the L/F-transferase family.

Its subcellular location is the cytoplasm. It carries out the reaction N-terminal L-lysyl-[protein] + L-leucyl-tRNA(Leu) = N-terminal L-leucyl-L-lysyl-[protein] + tRNA(Leu) + H(+). It catalyses the reaction N-terminal L-arginyl-[protein] + L-leucyl-tRNA(Leu) = N-terminal L-leucyl-L-arginyl-[protein] + tRNA(Leu) + H(+). The catalysed reaction is L-phenylalanyl-tRNA(Phe) + an N-terminal L-alpha-aminoacyl-[protein] = an N-terminal L-phenylalanyl-L-alpha-aminoacyl-[protein] + tRNA(Phe). Functionally, functions in the N-end rule pathway of protein degradation where it conjugates Leu, Phe and, less efficiently, Met from aminoacyl-tRNAs to the N-termini of proteins containing an N-terminal arginine or lysine. This is Leucyl/phenylalanyl-tRNA--protein transferase from Pseudomonas fluorescens (strain SBW25).